Consider the following 734-residue polypeptide: Photosystem I P700 chlorophyll a apoprotein A2 (734 aa).

The next 8 membrane-spanning stretches (helical) occupy residues 46–69, 135–158, 175–199, 273–291, 330–353, 369–395, 417–439, and 517–535; these read IFASHFGQLAVIFLWTSGNLFHVA, LYRGALFLLFLSTLALLAGWLHLQ, LNHHLSGLFGVSSLAWSGHLVHVAI, IAHHHLAIAILFIVAGHMY, LHFQLGLALASLGVITSLVAQHMY, AALYTHHQYIAGFIMVGAFAHGAIFFI, AIISHLSWASLFLGFHTLGLYVH, and FLVHHAIALGLHTTTLILV. [4Fe-4S] cluster is bound by residues C559 and C568. The next 2 membrane-spanning stretches (helical) occupy residues 575–596 and 643–665; these read AFYLAVFWMLNTIGWVTFYWHW and LSVWAWMFLFGHLIWATGFMFLI. H654, M662, and Y670 together coordinate chlorophyll a. Residue W671 participates in phylloquinone binding. A helical transmembrane segment spans residues 707 to 727; it reads LVGLSHFSVGYIFTYAAFLIA.

The protein belongs to the PsaA/PsaB family. The PsaA/B heterodimer binds the P700 chlorophyll special pair and subsequent electron acceptors. PSI consists of a core antenna complex that captures photons, and an electron transfer chain that converts photonic excitation into a charge separation. The eukaryotic PSI reaction center is composed of at least 11 subunits. Requires P700 is a chlorophyll a/chlorophyll a' dimer, A0 is one or more chlorophyll a, A1 is one or both phylloquinones and FX is a shared 4Fe-4S iron-sulfur center. as cofactor.

It is found in the plastid. It localises to the chloroplast thylakoid membrane. The enzyme catalyses reduced [plastocyanin] + hnu + oxidized [2Fe-2S]-[ferredoxin] = oxidized [plastocyanin] + reduced [2Fe-2S]-[ferredoxin]. In terms of biological role, psaA and PsaB bind P700, the primary electron donor of photosystem I (PSI), as well as the electron acceptors A0, A1 and FX. PSI is a plastocyanin-ferredoxin oxidoreductase, converting photonic excitation into a charge separation, which transfers an electron from the donor P700 chlorophyll pair to the spectroscopically characterized acceptors A0, A1, FX, FA and FB in turn. Oxidized P700 is reduced on the lumenal side of the thylakoid membrane by plastocyanin. The protein is Photosystem I P700 chlorophyll a apoprotein A2 of Chara vulgaris (Common stonewort).